Consider the following 277-residue polypeptide: uncharacterized protein (277 aa).

Solcar repeat units lie at residues 1–84 (MDQA…SKRV), 96–179 (ISVL…LKLW), and 184–268 (PTSL…VGMH). 6 helical membrane passes run 3-24 (QAIA…LDLA), 60-80 (LSIN…IYDF), 102-122 (LCSS…IWVV), 152-172 (CYAG…QFMA), 190-210 (IFMS…LLVI), and 240-261 (FYKG…TFLV).

The protein belongs to the mitochondrial carrier (TC 2.A.29) family.

It is found in the mitochondrion inner membrane. This is an uncharacterized protein from Schizosaccharomyces pombe (strain 972 / ATCC 24843) (Fission yeast).